A 135-amino-acid chain; its full sequence is ATP synthase epsilon chain (135 aa).

Belongs to the ATPase epsilon chain family. F-type ATPases have 2 components, CF(1) - the catalytic core - and CF(0) - the membrane proton channel. CF(1) has five subunits: alpha(3), beta(3), gamma(1), delta(1), epsilon(1). CF(0) has three main subunits: a, b and c.

Its subcellular location is the cell inner membrane. Functionally, produces ATP from ADP in the presence of a proton gradient across the membrane. The protein is ATP synthase epsilon chain of Rhizobium etli (strain CIAT 652).